The primary structure comprises 228 residues: MMIKQAELKRLERRVDYTFSDFSLLQQALTHRSALGNHNERLEFLGDSILSYAISTDLYARFPKVDEGDLSRMRATLVCGKMLAEIGREFQLGDCLILGPGELKSGGFRRDSIIADGVEAIIGAAFLDSDIDTVKKLILKWFDSRLNTIEPGISQKDPKTRLQEHLQSRKQPLPIYEVLEIKGEAHNQRFTMSCSIDGLKSVQGQGTSRRKAEQIAANKMLDSLSGAK.

Residues 8–130 enclose the RNase III domain; that stretch reads LKRLERRVDY…IIGAAFLDSD (123 aa). Glu43 is a Mg(2+) binding site. Asp47 is an active-site residue. The Mg(2+) site is built by Asp116 and Glu119. Glu119 is a catalytic residue. The region spanning 157–226 is the DRBM domain; that stretch reads DPKTRLQEHL…ANKMLDSLSG (70 aa).

The protein belongs to the ribonuclease III family. As to quaternary structure, homodimer. Requires Mg(2+) as cofactor.

Its subcellular location is the cytoplasm. It catalyses the reaction Endonucleolytic cleavage to 5'-phosphomonoester.. In terms of biological role, digests double-stranded RNA. Involved in the processing of primary rRNA transcript to yield the immediate precursors to the large and small rRNAs (23S and 16S). Processes some mRNAs, and tRNAs when they are encoded in the rRNA operon. Processes pre-crRNA and tracrRNA of type II CRISPR loci if present in the organism. The sequence is that of Ribonuclease 3 from Psychromonas ingrahamii (strain DSM 17664 / CCUG 51855 / 37).